The primary structure comprises 311 residues: Methionyl-tRNA formyltransferase (311 aa).

112–115 (SLLP) is a binding site for (6S)-5,6,7,8-tetrahydrofolate.

This sequence belongs to the Fmt family.

It catalyses the reaction L-methionyl-tRNA(fMet) + (6R)-10-formyltetrahydrofolate = N-formyl-L-methionyl-tRNA(fMet) + (6S)-5,6,7,8-tetrahydrofolate + H(+). In terms of biological role, attaches a formyl group to the free amino group of methionyl-tRNA(fMet). The formyl group appears to play a dual role in the initiator identity of N-formylmethionyl-tRNA by promoting its recognition by IF2 and preventing the misappropriation of this tRNA by the elongation apparatus. The polypeptide is Methionyl-tRNA formyltransferase (Sinorhizobium fredii (strain NBRC 101917 / NGR234)).